The sequence spans 142 residues: uncharacterized protein (142 aa).

N-linked (GlcNAc...) asparagine; by host glycans are attached at residues Asn-29 and Asn-67. The helical transmembrane segment at 88–108 (VFYLGYPVIFIIGVTYFSIIA) threads the bilayer.

The protein localises to the membrane. This is an uncharacterized protein from Acanthamoeba polyphaga mimivirus (APMV).